The chain runs to 657 residues: Probable Xaa-Pro aminopeptidase P (657 aa).

Mn(2+)-binding residues include D453, D464, E562, and E576.

Belongs to the peptidase M24B family. Mn(2+) serves as cofactor.

It catalyses the reaction Release of any N-terminal amino acid, including proline, that is linked to proline, even from a dipeptide or tripeptide.. Catalyzes the removal of a penultimate prolyl residue from the N-termini of peptides. This chain is Probable Xaa-Pro aminopeptidase P (ampp), found in Talaromyces marneffei (strain ATCC 18224 / CBS 334.59 / QM 7333) (Penicillium marneffei).